The chain runs to 445 residues: Phosphoglucosamine mutase (445 aa).

Catalysis depends on Ser-102, which acts as the Phosphoserine intermediate. Positions 102, 241, 243, and 245 each coordinate Mg(2+). At Ser-102 the chain carries Phosphoserine.

The protein belongs to the phosphohexose mutase family. Mg(2+) serves as cofactor. Activated by phosphorylation.

The enzyme catalyses alpha-D-glucosamine 1-phosphate = D-glucosamine 6-phosphate. Functionally, catalyzes the conversion of glucosamine-6-phosphate to glucosamine-1-phosphate. The polypeptide is Phosphoglucosamine mutase (Pectobacterium carotovorum subsp. carotovorum (strain PC1)).